Consider the following 824-residue polypeptide: MKVSVSWLKDLVEFNNDIDELSEKLSMTGFEVESLEDLSEQAKNVVIGFVEEITPHPNAEKLKVCSVDVGLPKKLSIVCGAPNVKAGFHVLVAKVGAYLSSKSLKIKLSNLRGVESEGMICSLEELGIESSNEGIEILEENEANIPPIGSNAVDYLCLNDTIIELAITANRPDGMSMVGIAREISTITNSKLTLPNLNYIEDFNIFEPKICDKETIGVDCIYSITYIDSIDNTGKTNKNIFNKLSSLKQNCINPVVDITNYLMLEQGQPLHAFDADLLDNIIGRKVKPNDFGIRNGKQGELFVALDKKEYKINPTIKLITCDDIPIAIAGVIGGNNSSVSDKTTRIWLEAAVFTPTSIRNSSREIGLRTDASSRYEKGISSNMTTAVSKRASELISVQLGGDNISSYVNTDFKKKSISVNLRMDKINSVLGKLSSSDSNFVNNNSTKLRYLNEDEIETLLSKLGLILTSNDSGWNVQVPPYRSSDLTREIDLIEEIARLIGYDNFDSNMPDPLEPGVLSPTKLVERRLRNSFIHNGFQEVVTSSLVGPENTDDNAVLIKNPLLSETSRLRTNVWDEHLKILQRNVSFGAEGCWIFEIAKTYKKDKECFVETNLLSGALTGSKRLSKWGGASKQLSLDYFEARGKLKQSLDVLGVETIDKQLAEKDFMHPGRTSELFVEGKSIGFFGQIHPSQSEKFDLIKETYLFNLDFDSLIKAATRKTNWTRIYKDYPTVPYMERDIALIHSKKYSSLEIMGLIKKTGRPLLEKVELIDRYEGSSMPEDEISQAFRIRYRDAKKTLVEKDINPIHEKIRNALKEKIKAELRS.

Positions 39–153 (SEQAKNVVIG…NIPPIGSNAV (115 aa)) constitute a tRNA-binding domain. The B5 domain occupies 414-507 (KKSISVNLRM…RLIGYDNFDS (94 aa)). Mg(2+)-binding residues include aspartate 485, aspartate 491, glutamate 494, and glutamate 495. One can recognise an FDX-ACB domain in the interval 730–823 (PTVPYMERDI…LKEKIKAELR (94 aa)).

This sequence belongs to the phenylalanyl-tRNA synthetase beta subunit family. Type 1 subfamily. In terms of assembly, tetramer of two alpha and two beta subunits. Mg(2+) is required as a cofactor.

The protein resides in the cytoplasm. The enzyme catalyses tRNA(Phe) + L-phenylalanine + ATP = L-phenylalanyl-tRNA(Phe) + AMP + diphosphate + H(+). The protein is Phenylalanine--tRNA ligase beta subunit of Prochlorococcus marinus (strain NATL2A).